The following is a 283-amino-acid chain: Acetylglutamate kinase (283 aa).

Residues 63 to 64, R85, and N178 each bind substrate; that span reads GG.

The protein belongs to the acetylglutamate kinase family. ArgB subfamily.

The protein resides in the cytoplasm. The catalysed reaction is N-acetyl-L-glutamate + ATP = N-acetyl-L-glutamyl 5-phosphate + ADP. The protein operates within amino-acid biosynthesis; L-arginine biosynthesis; N(2)-acetyl-L-ornithine from L-glutamate: step 2/4. Functionally, catalyzes the ATP-dependent phosphorylation of N-acetyl-L-glutamate. This Prochlorococcus marinus (strain MIT 9312) protein is Acetylglutamate kinase.